The following is a 63-amino-acid chain: Large ribosomal subunit protein bL28 (63 aa).

The protein belongs to the bacterial ribosomal protein bL28 family.

In Geobacter metallireducens (strain ATCC 53774 / DSM 7210 / GS-15), this protein is Large ribosomal subunit protein bL28.